Here is a 406-residue protein sequence, read N- to C-terminus: Endoglucanase 1 (406 aa).

The first 43 residues, 1–43 (MNSKKIGAMIAAAVLSLIVMTPAATRKIVQRQTRNSSTAVENS), serve as a signal peptide directing secretion. Polar residues-rich tracts occupy residues 30–41 (QRQTRNSSTAVE) and 51–62 (ENVPVSQTHTND). The interval 30–62 (QRQTRNSSTAVENSAADESETENVPVSQTHTND) is disordered. The Proton donor role is filled by glutamate 210. The Nucleophile role is filled by glutamate 330.

Belongs to the glycosyl hydrolase 5 (cellulase A) family.

The catalysed reaction is Endohydrolysis of (1-&gt;4)-beta-D-glucosidic linkages in cellulose, lichenin and cereal beta-D-glucans.. This is Endoglucanase 1 (Eg I) from Ruminococcus albus.